The sequence spans 96 residues: Acetolactate synthase isozyme 1 small subunit (96 aa).

The region spanning 10-83 (ILELTVRNHP…DVVKVQRNQS (74 aa)) is the ACT domain.

This sequence belongs to the acetolactate synthase small subunit family. Dimer of large and small chains.

The catalysed reaction is 2 pyruvate + H(+) = (2S)-2-acetolactate + CO2. It functions in the pathway amino-acid biosynthesis; L-isoleucine biosynthesis; L-isoleucine from 2-oxobutanoate: step 1/4. Its pathway is amino-acid biosynthesis; L-valine biosynthesis; L-valine from pyruvate: step 1/4. This chain is Acetolactate synthase isozyme 1 small subunit (ilvN), found in Escherichia coli O157:H7.